Consider the following 98-residue polypeptide: uncharacterized protein (98 aa).

Residues 37–91 (LITSRQQLGISQKQLETLSGVKQPMIARIEKGQTNPQLETLLKLLAPLGKTLSIV) enclose the HTH cro/C1-type domain. A DNA-binding region (H-T-H motif) is located at residues 48-67 (QKQLETLSGVKQPMIARIEK).

This is an uncharacterized protein from Haemophilus influenzae (strain ATCC 51907 / DSM 11121 / KW20 / Rd).